A 583-amino-acid polypeptide reads, in one-letter code: MASKGSPSCRLVFCLLISAAVLRPGLGWYTVNSAYGDTIVMPCRLDVPQNLMFGKWKYEKPDGSPVFIAFRSSTKKSVQYDDVPEYKDRLSLSENYTLSINNAKISDEKRFVCMLVTEDNVFEAPTLVKVFKQPSKPEIVNRAAFLETEQLKKLGDCISRDSYPDGNITWYRNGKVLQPVDGEVSILFKKEIDPGTQLYTMTSSLEYKTTKSDIQMPFTCSVTYYGPSGQKTIYSEQAIFDIYYPTEQVTIQVLPPKNAIKEGDNITLQCLGNGNPPPEEFMFYLPGQAEGIRSSNTYTLTDVRRNATGDYKCSLIDQRNMAASTTITVHYLDLSLNPSGEVTKQIGDTLPVSCTISASRNATVVWMKDNIRLRSSPSFSSLHYQDAGNYVCETALQEVEGLKKRESLTLIVEGKPQIKMTKKTDPSGLSKTIICHVEGFPKPAIQWTITGSGSVINQTEESPYINGRYYSKIIISPEENVTLTCTAENQLERTVNSLNVSAISIPEHDEADDISDENREKVNDQAKLIVGIVVGLLLAALVAGVVYWLYMKKSKTASKHVNKDLGNMEENKKLEENNHKTEA.

An N-terminal signal peptide occupies residues 1–27 (MASKGSPSCRLVFCLLISAAVLRPGLG). 2 consecutive Ig-like V-type domains span residues 28-120 (WYTV…TEDN) and 125-234 (PTLV…KTIY). At 28 to 527 (WYTVNSAYGD…NREKVNDQAK (500 aa)) the chain is on the extracellular side. 2 disulfides stabilise this stretch: Cys43–Cys113 and Cys157–Cys220. Asn95, Asn167, Asn265, Asn306, Asn361, Asn457, Asn480, and Asn499 each carry an N-linked (GlcNAc...) asparagine glycan. 3 consecutive Ig-like C2-type domains span residues 245 to 328 (PTEQ…TTIT), 333 to 409 (DLSL…ESLT), and 416 to 501 (PQIK…LNVS). Cystine bridges form between Cys270-Cys313, Cys354-Cys392, and Cys435-Cys485. The helical transmembrane segment at 528-549 (LIVGIVVGLLLAALVAGVVYWL) threads the bilayer. Residues 550–583 (YMKKSKTASKHVNKDLGNMEENKKLEENNHKTEA) lie on the Cytoplasmic side of the membrane. Residues 562 to 583 (NKDLGNMEENKKLEENNHKTEA) form a disordered region. Residues 569–583 (EENKKLEENNHKTEA) are compositionally biased toward basic and acidic residues.

Homodimer. Interacts (via extracellular domain) with CD6 (via extracellular domain). Homodimerization and interaction with CD6 involve the same region and cannot occur simultaneously. The affinity for CD6 is much higher than the affinity for self-association. Interacts (via glycosylated extracellular domain) with LGALS1 and LGALS3. Interaction with LGALS1 or LGALS3 inhibits interaction with CD6. Post-translationally, the N-terminus is blocked. In terms of processing, glycosylated. As to expression, strongest expression in the lung, then brain, liver, and kidney. Present in the somatosensory system, basal ganglia, cortex, olfactory system, and circumventricular organs.

The protein localises to the cell membrane. The protein resides in the cell projection. It localises to the axon. It is found in the dendrite. In terms of biological role, cell adhesion molecule that mediates both heterotypic cell-cell contacts via its interaction with CD6, as well as homotypic cell-cell contacts. Promotes T-cell activation and proliferation via its interactions with CD6. Contributes to the formation and maturation of the immunological synapse via its interactions with CD6. Mediates homotypic interactions with cells that express ALCAM. Mediates attachment of dendritic cells onto endothelial cells via homotypic interaction. Inhibits endothelial cell migration and promotes endothelial tube formation via homotypic interactions. Required for normal organization of the lymph vessel network. Required for normal hematopoietic stem cell engraftment in the bone marrow. Plays a role in hematopoiesis; required for normal numbers of hematopoietic stem cells in bone marrow. Promotes in vitro osteoblast proliferation and differentiation. Promotes neurite extension, axon growth and axon guidance; axons grow preferentially on surfaces that contain ALCAM. Mediates outgrowth and pathfinding for retinal ganglion cell axons. This chain is CD166 antigen (Alcam), found in Rattus norvegicus (Rat).